The primary structure comprises 447 residues: MALNRLVFSLSLWLGFIGAAQAASSEPLPPSKDPWYTAPPGFESAEPGTVLRVRPAPGNLTSITANSSASYNILYRTTDSHFKPTWAVTTLLVPELGPDSLAQQKFQQSALLSFQVPYDSADVDASPSYSMYSASNDSSAPYTAALGSGLFVSVPDYEGPLAAFTAGIISGYATLDSIRAVLSLGLGLNITNSPRAALWGYSGGAFATEWASELAVQYAPDLVAGPVVGAAMGAPLANITTFMHSVNGQATSGLVPNTLLGLTSQYPDVRKYLVSKLNDDSEYNRTGFLAAEGFTVTESGVAFAGIDINKYFQNGTDILNDPKILALVNREGIMGYHGVPKWPLFIYQAIPDEVTPISATDALVEKYCAVGADILYERNTVGSHYEETNNSYKAAVQWLEDVFSSQHDINRAQGCVIQDVTRNTTSGDLVRRKDVQKSVFDLWSAAW.

An N-terminal signal peptide occupies residues M1–A22. N-linked (GlcNAc...) asparagine glycosylation is found at N59, N66, N136, and N189. S202 (charge relay system) is an active-site residue. Residues N238, N284, and N314 are each glycosylated (N-linked (GlcNAc...) asparagine). Catalysis depends on charge relay system residues D352 and H384. N389 and N423 each carry an N-linked (GlcNAc...) asparagine glycan.

Belongs to the AB hydrolase superfamily. Lipase family.

It participates in sesquiterpene biosynthesis; trichothecene biosynthesis. In terms of biological role, trichothecene C-3 esterase; part of the core gene cluster that mediates the biosynthesis of trichothecenes, a very large family of chemically related bicyclic sesquiterpene compounds acting as mycotoxins, including T2-toxin. The biosynthesis of trichothecenes begins with the cyclization of farnesyl diphosphate to trichodiene and is catalyzed by the trichodiene synthase TRI5. Trichodiene undergoes a series of oxygenations catalyzed by the cytochrome P450 monooxygenase TRI4. TRI4 controls the addition of four oxygens at C-2, C-3, C-11, and the C-12, C-13-epoxide to form the intermediate isotrichotriol. Isotrichotriol then undergoes a non-enzymatic isomerization and cyclization to form isotrichodermol. During this process, the oxygen at the C-2 position becomes the pyran ring oxygen and the hydroxyl group at C-11 is lost. More complex type A trichothecenes are built by modifying isotrichodermol through a series of paired hydroxylation and acetylation or acylation steps. Isotrichodermol is converted to isotrichodermin by the acetyltransferase TRI101. TRI101 encodes a C-3 transacetylase that acts as a self-protection or resistance factor during biosynthesis and that the presence of a free C-3 hydroxyl group is a key component of Fusarium trichothecene phytotoxicity. A second hydroxyl group is added to C-15 by the trichothecene C-15 hydroxylase TRI11, producing 15-decalonectrin, which is then acetylated by TRI3, producing calonectrin. A third hydroxyl group is added at C-4 by the cytochrome P450 monooxygenase TRI13, converting calonectrin to 3,15-diacetoxyspirpenol, which is subsequently acetylated by the acetyltransferase TRI7. A fourth hydroxyl group is added to C-8 by the cytochrome P450 monooxygenase TRI1, followed by the addition of an isovaleryl moiety by TRI16. Finally, the acetyl group is removed from the C-3 position by the trichothecene C-3 esterase TRI8 to produce T-2 toxin. The sequence is that of Trichothecene C-3 esterase from Fusarium sporotrichioides.